A 308-amino-acid chain; its full sequence is Cell division protein ZipA (308 aa).

Topologically, residues 1 to 5 (MQELR) are periplasmic. A helical transmembrane segment spans residues 6 to 26 (LVLILVGALAIAALLFHGLWT). Over 27 to 308 (SRKETSSKFG…YKQRVKVFCN (282 aa)) the chain is Cytoplasmic. The tract at residues 43–90 (FDSESEDEQPTPARGFEQPKESVVDVRQERKEPAFGRDEPNLSQDPLF) is disordered. The span at 59 to 82 (EQPKESVVDVRQERKEPAFGRDEP) shows a compositional bias: basic and acidic residues.

It belongs to the ZipA family. In terms of assembly, interacts with FtsZ via their C-terminal domains.

It localises to the cell inner membrane. Functionally, essential cell division protein that stabilizes the FtsZ protofilaments by cross-linking them and that serves as a cytoplasmic membrane anchor for the Z ring. Also required for the recruitment to the septal ring of downstream cell division proteins. This Aliivibrio salmonicida (strain LFI1238) (Vibrio salmonicida (strain LFI1238)) protein is Cell division protein ZipA.